Consider the following 213-residue polypeptide: MANKFTREYKLVVVGGGGVGKSCLTIQLIQGHFLDEYDPTIEDSYRKQCTIDNEVALLDILDTAGQEEYSAMREQYMRTGEGFLLVFAINSRESFEEIRIYQQQILRVKDRDSFPMIIVGNKYDLRGERVVSEQEGQALAAEFGTKYIETSAKTQHNVENAFYDLVREIRKEDKKLGEKVGGTSFANNNGAVKQMDVGDEDVQAGCCAKCIMM.

Gly-15–Ser-22 is a binding site for GTP. The Effector region signature appears at Tyr-37–Tyr-45. Residues Asp-62–Gln-66 and Asn-121–Asp-124 contribute to the GTP site. A Cysteine methyl ester modification is found at Cys-210. A lipid anchor (S-farnesyl cysteine) is attached at Cys-210. A propeptide spans Ile-211–Met-213 (removed in mature form).

This sequence belongs to the small GTPase superfamily. Ras family.

It is found in the cell membrane. It catalyses the reaction GTP + H2O = GDP + phosphate + H(+). In terms of biological role, ras proteins bind GDP/GTP and possess intrinsic GTPase activity. The sequence is that of Protein ras-1 (ras-1) from Neurospora crassa (strain ATCC 24698 / 74-OR23-1A / CBS 708.71 / DSM 1257 / FGSC 987).